We begin with the raw amino-acid sequence, 454 residues long: Probable tRNA methyltransferase 9B (454 aa).

Residue Ser-214 is modified to Phosphoserine.

It belongs to the methyltransferase superfamily. In terms of tissue distribution, down-regulated in breast, bladder, colorectal, cervix and testicular carcinomas.

May modify wobble uridines in specific arginine and glutamic acid tRNAs. Acts as a tumor suppressor by promoting the expression of LIN9. This Homo sapiens (Human) protein is Probable tRNA methyltransferase 9B.